Here is a 505-residue protein sequence, read N- to C-terminus: Lysine--tRNA ligase (505 aa).

Residues glutamate 415 and glutamate 422 each coordinate Mg(2+).

Belongs to the class-II aminoacyl-tRNA synthetase family. As to quaternary structure, homodimer. Mg(2+) is required as a cofactor.

It localises to the cytoplasm. The catalysed reaction is tRNA(Lys) + L-lysine + ATP = L-lysyl-tRNA(Lys) + AMP + diphosphate. The protein is Lysine--tRNA ligase (lysS) of Salmonella typhimurium (strain LT2 / SGSC1412 / ATCC 700720).